Consider the following 610-residue polypeptide: E-selectin (610 aa).

The first 21 residues, 1–21 (MIASQFLSALTLVLLIKESGA), serve as a signal peptide directing secretion. A C-type lectin domain is found at 22 to 138 (WSYSASTTNM…CNKKKLALCY (117 aa)). Over 22–555 (WSYSASTTNM…CEATAKSNIP (534 aa)) the chain is Extracellular. N-linked (GlcNAc...) asparagine glycosylation occurs at Asn30. Disulfide bonds link Cys40-Cys137, Cys110-Cys129, Cys142-Cys153, Cys147-Cys162, Cys164-Cys173, Cys179-Cys223, Cys192-Cys205, Cys209-Cys236, Cys241-Cys285, Cys254-Cys267, Cys271-Cys298, Cys303-Cys348, Cys334-Cys361, Cys366-Cys411, Cys397-Cys424, Cys429-Cys474, Cys460-Cys487, Cys492-Cys533, and Cys519-Cys546. Glu101, Asn103, and Glu108 together coordinate Ca(2+). A carbohydrate-binding positions include 101–108 (EPNNKQNE), 112–117 (EIYIKR), and 125–127 (NDE). Ca(2+) contacts are provided by Asn125 and Asp126. The region spanning 139–174 (TAACTHTSCSGHGECVETINNYTCQCHPGFTGLRCE) is the EGF-like domain. Asn159 is a glycosylation site (N-linked (GlcNAc...) asparagine). Sushi domains are found at residues 177–238 (VTCQ…ACHV), 239–300 (VECD…TCKA), 314–363 (VNCS…VCKA), 365–426 (QCKA…TCEA), 428–489 (RCDA…SCQV), and 490–548 (VQCA…TCEA). Residues Asn198 and Asn202 are each glycosylated (N-linked (GlcNAc...) asparagine). Asn264 carries an N-linked (GlcNAc...) asparagine glycan. 3 N-linked (GlcNAc...) asparagine glycosylation sites follow: Asn315, Asn327, and Asn331. Asn526 carries an N-linked (GlcNAc...) asparagine glycan. A helical transmembrane segment spans residues 556 to 577 (LTVGLSAAGTSLLTLASFLFWL). Over 578–610 (LKRLRRKAKKFVPASSYQSLQSDGSYQMPSESA) the chain is Cytoplasmic.

Belongs to the selectin/LECAM family. Interacts with SELPLG/PSGL1 and PODXL2 through the sialyl Lewis X epitope. SELPLG sulfation appears not to be required for this interaction.

The protein resides in the cell membrane. Cell-surface glycoprotein having a role in immunoadhesion. Mediates in the adhesion of blood neutrophils in cytokine-activated endothelium through interaction with SELPLG/PSGL1. May have a role in capillary morphogenesis. This Equus caballus (Horse) protein is E-selectin (SELE).